Here is a 161-residue protein sequence, read N- to C-terminus: Protein-export protein SecB (161 aa).

This sequence belongs to the SecB family. Homotetramer, a dimer of dimers. One homotetramer interacts with 1 SecA dimer.

The protein localises to the cytoplasm. In terms of biological role, one of the proteins required for the normal export of preproteins out of the cell cytoplasm. It is a molecular chaperone that binds to a subset of precursor proteins, maintaining them in a translocation-competent state. It also specifically binds to its receptor SecA. The chain is Protein-export protein SecB from Shewanella sp. (strain ANA-3).